Here is an 88-residue protein sequence, read N- to C-terminus: Small ribosomal subunit protein uS15 (88 aa).

This sequence belongs to the universal ribosomal protein uS15 family. In terms of assembly, part of the 30S ribosomal subunit. Forms a bridge to the 50S subunit in the 70S ribosome, contacting the 23S rRNA.

One of the primary rRNA binding proteins, it binds directly to 16S rRNA where it helps nucleate assembly of the platform of the 30S subunit by binding and bridging several RNA helices of the 16S rRNA. In terms of biological role, forms an intersubunit bridge (bridge B4) with the 23S rRNA of the 50S subunit in the ribosome. The polypeptide is Small ribosomal subunit protein uS15 (Borrelia hermsii (strain HS1 / DAH)).